Reading from the N-terminus, the 81-residue chain is Sulfur carrier protein TusA (81 aa).

The active-site Cysteine persulfide intermediate is C19.

This sequence belongs to the sulfur carrier protein TusA family.

It is found in the cytoplasm. In terms of biological role, sulfur carrier protein which probably makes part of a sulfur-relay system. This Aeromonas salmonicida (strain A449) protein is Sulfur carrier protein TusA.